We begin with the raw amino-acid sequence, 567 residues long: Multidrug transporter TPO1_1 (567 aa).

Positions 1-71 are disordered; sequence MVEEISPKYT…NRRMSRILTG (71 aa). Residue asparagine 120 is glycosylated (N-linked (GlcNAc...) asparagine). 12 helical membrane-spanning segments follow: residues 128–148, 157–177, 194–214, 224–244, 253–273, 283–303, 358–378, 396–416, 436–456, 471–491, 498–520, and 531–551; these read IICI…SIFA, IYHV…FGFA, GVLV…ATSK, FFGG…FADM, AICL…VMGS, WLEY…ALTF, PLLL…YLML, ELPY…LWYF, LIPM…FCWT, AGSF…NYII, AASA…PLFA, and WAGL…LFFL.

The protein belongs to the major facilitator superfamily. DHA1 family. Polyamines/proton antiporter (TC 2.A.1.2.16) subfamily.

Its subcellular location is the cell membrane. Functionally, multidrug resistance transporter involved in resistance to azole antifungal drugs such as the imidazoles miconazole, ketoconazole, and tioconazole; as well as the triazoles itraconazole and fluconazole. Also plays a role in the resistance to other antifungal drug families such as the polyene amphotericin B, the pyrimide analog flucytosine, the fungicide mancozeb, and the polyamine spermine. Decreases the intracellular accumulation of clotrimazole by mediating its extrusion from cells. Involved in virulence by conferring resistance to the human antimicrobial peptide histatin-5. In Candida glabrata (strain ATCC 2001 / BCRC 20586 / JCM 3761 / NBRC 0622 / NRRL Y-65 / CBS 138) (Yeast), this protein is Multidrug transporter TPO1_1.